The chain runs to 112 residues: Nucleoid-associated protein lpg2755 (112 aa).

It belongs to the YbaB/EbfC family. As to quaternary structure, homodimer.

Its subcellular location is the cytoplasm. It is found in the nucleoid. Functionally, binds to DNA and alters its conformation. May be involved in regulation of gene expression, nucleoid organization and DNA protection. The protein is Nucleoid-associated protein lpg2755 of Legionella pneumophila subsp. pneumophila (strain Philadelphia 1 / ATCC 33152 / DSM 7513).